We begin with the raw amino-acid sequence, 355 residues long: 3-isopropylmalate dehydrogenase (355 aa).

NAD(+) is bound at residue 78 to 91 (GYKWDNLPRPERPE). Residues R98, R136, and D226 each coordinate substrate. Mg(2+)-binding residues include D226, D250, and D254. 284 to 296 (GSAPDIAGQDKAN) contacts NAD(+).

The protein belongs to the isocitrate and isopropylmalate dehydrogenases family. LeuB type 1 subfamily. As to quaternary structure, homodimer. Requires Mg(2+) as cofactor. Mn(2+) is required as a cofactor.

The protein localises to the cytoplasm. It catalyses the reaction (2R,3S)-3-isopropylmalate + NAD(+) = 4-methyl-2-oxopentanoate + CO2 + NADH. It functions in the pathway amino-acid biosynthesis; L-leucine biosynthesis; L-leucine from 3-methyl-2-oxobutanoate: step 3/4. In terms of biological role, catalyzes the oxidation of 3-carboxy-2-hydroxy-4-methylpentanoate (3-isopropylmalate) to 3-carboxy-4-methyl-2-oxopentanoate. The product decarboxylates to 4-methyl-2 oxopentanoate. In Arthrospira platensis (Spirulina platensis), this protein is 3-isopropylmalate dehydrogenase (leuB).